Here is a 505-residue protein sequence, read N- to C-terminus: Deoxyguanosinetriphosphate triphosphohydrolase (505 aa).

The HD domain maps to 66–273 (RLTHSMEVQQ…MEAADDISYC (208 aa)).

Belongs to the dGTPase family. Type 1 subfamily. As to quaternary structure, homotetramer. Mg(2+) is required as a cofactor.

It carries out the reaction dGTP + H2O = 2'-deoxyguanosine + triphosphate + H(+). Its function is as follows. dGTPase preferentially hydrolyzes dGTP over the other canonical NTPs. This is Deoxyguanosinetriphosphate triphosphohydrolase from Escherichia coli O139:H28 (strain E24377A / ETEC).